The following is a 170-amino-acid chain: Small ribosomal subunit protein mS41 (170 aa).

The transit peptide at 1-20 (MFRTLLSSTVRSIQLKPVTS) directs the protein to the mitochondrion.

This sequence belongs to the mitochondrion-specific ribosomal protein mS41 family. Component of the mitochondrial small ribosomal subunit (mt-SSU).

It localises to the mitochondrion. In terms of biological role, component of the mitochondrial ribosome (mitoribosome), a dedicated translation machinery responsible for the synthesis of mitochondrial genome-encoded proteins, including at least some of the essential transmembrane subunits of the mitochondrial respiratory chain. The mitoribosomes are attached to the mitochondrial inner membrane and translation products are cotranslationally integrated into the membrane. mS41 is involved in telomere length regulation. This chain is Small ribosomal subunit protein mS41 (FYV4), found in Candida albicans (strain SC5314 / ATCC MYA-2876) (Yeast).